The following is a 241-amino-acid chain: Ubiquinone biosynthesis O-methyltransferase (241 aa).

4 residues coordinate S-adenosyl-L-methionine: arginine 46, glycine 66, aspartate 87, and methionine 131.

Belongs to the methyltransferase superfamily. UbiG/COQ3 family.

It carries out the reaction a 3-demethylubiquinol + S-adenosyl-L-methionine = a ubiquinol + S-adenosyl-L-homocysteine + H(+). It catalyses the reaction a 3-(all-trans-polyprenyl)benzene-1,2-diol + S-adenosyl-L-methionine = a 2-methoxy-6-(all-trans-polyprenyl)phenol + S-adenosyl-L-homocysteine + H(+). Its pathway is cofactor biosynthesis; ubiquinone biosynthesis. Functionally, O-methyltransferase that catalyzes the 2 O-methylation steps in the ubiquinone biosynthetic pathway. This Bordetella avium (strain 197N) protein is Ubiquinone biosynthesis O-methyltransferase.